The chain runs to 136 residues: Fluoride-specific ion channel FluC (136 aa).

Helical transmembrane passes span 3-23 (TLPPLYATLNVALGGAIGAVL), 46-66 (ATLAINALGSLLMGVLAGVLF), 78-98 (LLIGTGILGGFTTFSAFSLEV), and 109-129 (FAALYVVLSVSLAISALVFGL). 2 residues coordinate Na(+): G86 and T89.

The protein belongs to the fluoride channel Fluc/FEX (TC 1.A.43) family.

It is found in the cell inner membrane. It catalyses the reaction fluoride(in) = fluoride(out). With respect to regulation, na(+) is not transported, but it plays an essential structural role and its presence is essential for fluoride channel function. Its function is as follows. Fluoride-specific ion channel. Important for reducing fluoride concentration in the cell, thus reducing its toxicity. The protein is Fluoride-specific ion channel FluC of Erythrobacter litoralis (strain HTCC2594).